The primary structure comprises 381 residues: 4-hydroxy-3-methylbut-2-en-1-yl diphosphate synthase (flavodoxin) (381 aa).

Residues Cys-280, Cys-283, Cys-315, and Glu-322 each contribute to the [4Fe-4S] cluster site.

It belongs to the IspG family. The cofactor is [4Fe-4S] cluster.

It carries out the reaction (2E)-4-hydroxy-3-methylbut-2-enyl diphosphate + oxidized [flavodoxin] + H2O + 2 H(+) = 2-C-methyl-D-erythritol 2,4-cyclic diphosphate + reduced [flavodoxin]. Its pathway is isoprenoid biosynthesis; isopentenyl diphosphate biosynthesis via DXP pathway; isopentenyl diphosphate from 1-deoxy-D-xylulose 5-phosphate: step 5/6. Its function is as follows. Converts 2C-methyl-D-erythritol 2,4-cyclodiphosphate (ME-2,4cPP) into 1-hydroxy-2-methyl-2-(E)-butenyl 4-diphosphate. This chain is 4-hydroxy-3-methylbut-2-en-1-yl diphosphate synthase (flavodoxin), found in Clavibacter sepedonicus (Clavibacter michiganensis subsp. sepedonicus).